Consider the following 134-residue polypeptide: Profilin-3 (134 aa).

Residues Cys13 and Cys118 are joined by a disulfide bond. The Involved in PIP2 interaction signature appears at 84–100 (AVIRGKKGSGGITIKKT). Thr114 is subject to Phosphothreonine.

It belongs to the profilin family. In terms of assembly, occurs in many kinds of cells as a complex with monomeric actin in a 1:1 ratio. Post-translationally, phosphorylated by MAP kinases.

The protein resides in the cytoplasm. It is found in the cytoskeleton. Its function is as follows. Binds to actin and affects the structure of the cytoskeleton. At high concentrations, profilin prevents the polymerization of actin, whereas it enhances it at low concentrations. In Olea europaea (Common olive), this protein is Profilin-3.